A 580-amino-acid polypeptide reads, in one-letter code: Extracellular protease (580 aa).

Positions 1–32 are cleaved as a signal peptide; it reads MSTASLRKRTGSLTILGASALTSLLLAMPAFA. Residues 33 to 136 constitute a propeptide that is removed on maturation; it reads GEVYLDGLAT…VEVDQILHAT (104 aa). Residues 147-465 form the Peptidase S8 domain; the sequence is QWAFGTTNAG…AGIVNADAAV (319 aa). Residues D177 and H237 each act as charge relay system in the active site. 2 cysteine pairs are disulfide-bonded: C225-C273 and C315-C352. The active-site Charge relay system is S409. An intrachain disulfide couples C450 to C454.

It belongs to the peptidase S8 family.

Its subcellular location is the secreted. The polypeptide is Extracellular protease (Xanthomonas campestris pv. campestris (strain ATCC 33913 / DSM 3586 / NCPPB 528 / LMG 568 / P 25)).